A 132-amino-acid chain; its full sequence is UPF0060 membrane protein SG1469 (132 aa).

Transmembrane regions (helical) follow at residues 5 to 25 (VLLYIATAVAAILGCYLPYCY), 32 to 52 (LLLIPAALSLIAFVGLLVLYP), and 60 to 80 (AAYGGVYILTAFLWLRFIDGI).

It belongs to the UPF0060 family.

It is found in the cell inner membrane. This is UPF0060 membrane protein SG1469 from Sodalis glossinidius (strain morsitans).